The chain runs to 637 residues: 1-deoxy-D-xylulose-5-phosphate synthase (637 aa).

Thiamine diphosphate contacts are provided by residues H76 and 117–119 (GHS). D148 contributes to the Mg(2+) binding site. Residues 149–150 (GA), N177, Y294, and E381 each bind thiamine diphosphate. Mg(2+) is bound at residue N177.

Belongs to the transketolase family. DXPS subfamily. In terms of assembly, homodimer. The cofactor is Mg(2+). It depends on thiamine diphosphate as a cofactor.

It catalyses the reaction D-glyceraldehyde 3-phosphate + pyruvate + H(+) = 1-deoxy-D-xylulose 5-phosphate + CO2. Its pathway is metabolic intermediate biosynthesis; 1-deoxy-D-xylulose 5-phosphate biosynthesis; 1-deoxy-D-xylulose 5-phosphate from D-glyceraldehyde 3-phosphate and pyruvate: step 1/1. Its function is as follows. Catalyzes the acyloin condensation reaction between C atoms 2 and 3 of pyruvate and glyceraldehyde 3-phosphate to yield 1-deoxy-D-xylulose-5-phosphate (DXP). This Neisseria meningitidis serogroup B (strain ATCC BAA-335 / MC58) protein is 1-deoxy-D-xylulose-5-phosphate synthase.